Reading from the N-terminus, the 285-residue chain is Diphthine methyl ester synthase (285 aa).

S-adenosyl-L-methionine-binding positions include Leu-9, Asp-84, Gly-87, 112-113 (SI), Leu-163, Val-221, and His-246.

It belongs to the diphthine synthase family.

The protein resides in the cytoplasm. The catalysed reaction is 2-[(3S)-amino-3-carboxypropyl]-L-histidyl-[translation elongation factor 2] + 4 S-adenosyl-L-methionine = diphthine methyl ester-[translation elongation factor 2] + 4 S-adenosyl-L-homocysteine + 3 H(+). It functions in the pathway protein modification; peptidyl-diphthamide biosynthesis. Its function is as follows. S-adenosyl-L-methionine-dependent methyltransferase that catalyzes four methylations of the modified target histidine residue in translation elongation factor 2 (EF-2), to form an intermediate called diphthine methyl ester. The four successive methylation reactions represent the second step of diphthamide biosynthesis. This Aspergillus fumigatus (strain ATCC MYA-4609 / CBS 101355 / FGSC A1100 / Af293) (Neosartorya fumigata) protein is Diphthine methyl ester synthase (dph5).